The following is a 238-amino-acid chain: Putative csd-like protein HI_1343 (238 aa).

Position 146 is an N6-(pyridoxal phosphate)lysine (K146).

It belongs to the class-V pyridoxal-phosphate-dependent aminotransferase family. Csd subfamily.

This chain is Putative csd-like protein HI_1343, found in Haemophilus influenzae (strain ATCC 51907 / DSM 11121 / KW20 / Rd).